The primary structure comprises 132 residues: Small ribosomal subunit protein uS8 (132 aa).

The protein belongs to the universal ribosomal protein uS8 family. In terms of assembly, part of the 30S ribosomal subunit. Contacts proteins S5 and S12.

In terms of biological role, one of the primary rRNA binding proteins, it binds directly to 16S rRNA central domain where it helps coordinate assembly of the platform of the 30S subunit. The chain is Small ribosomal subunit protein uS8 from Streptococcus sanguinis (strain SK36).